A 384-amino-acid polypeptide reads, in one-letter code: UPF0496 protein At3g28310/At3g28320 (384 aa).

The stretch at 184 to 215 forms a coiled coil; the sequence is QESLFDRVTETKERIAKEIEEVQKRISNVNTA. 2 consecutive transmembrane segments (helical) span residues 217 to 237 and 242 to 262; these read IVSH…CIAL and VGAP…VQWV. Residues 264-361 adopt a coiled-coil conformation; that stretch reads VNYVLNNSLE…TTKITEVCET (98 aa).

Belongs to the UPF0496 family.

The protein localises to the membrane. This is UPF0496 protein At3g28310/At3g28320 from Arabidopsis thaliana (Mouse-ear cress).